The chain runs to 163 residues: Ribonuclease P protein subunit p25-like protein (163 aa).

Disordered regions lie at residues methionine 1 to aspartate 24 and leucine 126 to serine 163. Residues arginine 153 to serine 163 are compositionally biased toward basic residues.

It belongs to the histone-like Alba family.

Its subcellular location is the nucleus. May be a component of ribonuclease P or MRP. This is Ribonuclease P protein subunit p25-like protein (Rpp25l) from Mus musculus (Mouse).